The primary structure comprises 479 residues: Solute carrier family 46 member 2 (479 aa).

Residues 1–23 (MGPGGTCPWSSRLSGFRVRTWIE) are Cytoplasmic-facing. The chain crosses the membrane as a helical span at residues 24–44 (PVVASTQVAGSLYDAGLLLVV). The Extracellular portion of the chain corresponds to 45 to 80 (KESFKSEAGGSSNYSANQSLVEYQEDQQQKAISNFN). 2 N-linked (GlcNAc...) asparagine glycosylation sites follow: Asn57 and Asn61. Residues 81–101 (IIYNLVLGLTPLLSAYGLGWL) form a helical membrane-spanning segment. Residues 102 to 110 (SDRYHRKIS) are Cytoplasmic-facing. The chain crosses the membrane as a helical span at residues 111 to 131 (ICTAMLGFLLSRIGLLLKVML). The Extracellular segment spans residues 132-140 (DWPVEVMYG). The helical transmembrane segment at 141-161 (AAALNGLCGSFSAYWSGVMAL) threads the bilayer. Residues 162–174 (GSLGCSEGRRSVR) are Cytoplasmic-facing. A helical transmembrane segment spans residues 175–195 (LILIDLVLGLAGFSGSMASGH). Residues 196 to 207 (LFKQIVGHSAQG) lie on the Extracellular side of the membrane. The chain crosses the membrane as a helical span at residues 208–228 (LLLTACSVGCAAFALFYSLFV). Over 229–281 (LKVPESKPNKVHPTVDTVSGMMGTYRTLDPDQQDKQNVPRNPRTPGKGKSSQR) the chain is Cytoplasmic. The interval 255 to 277 (TLDPDQQDKQNVPRNPRTPGKGK) is disordered. A helical membrane pass occupies residues 282–302 (EVVALLFVGAIIYDLAAVGTV). Topologically, residues 303 to 321 (DVMALFVLKEPLHWNQVQL) are extracellular. A helical transmembrane segment spans residues 322 to 342 (GYGMASGYIIFITSFLGVLVF). Residues 343–348 (SRCFRD) are Cytoplasmic-facing. The chain crosses the membrane as a helical span at residues 349-369 (TTMIIIGMLSFGSGALLLAFV). The Extracellular portion of the chain corresponds to 370 to 371 (KE). The chain crosses the membrane as a helical span at residues 372–392 (TYMFYIARAIMLFALIPITTI). Topologically, residues 393 to 407 (RSAMSKLIKDSSYGK) are cytoplasmic. A helical transmembrane segment spans residues 408–428 (IFVILQLCLTLTGVVTSTIYN). Residues 429–441 (KIYQLTLDKFIGT) are Extracellular-facing. A helical transmembrane segment spans residues 442 to 462 (CFVLSSFLSFLAIVPIGVVAY). Residues 463 to 479 (KQVPRSQQGECAEKQRS) are Cytoplasmic-facing.

Belongs to the major facilitator superfamily. SLC46A family. In terms of processing, glycosylated. Expressed on cortical epithelial cells in the thymus. Mainly expressed in the thymic cortex and is highly enriched in SCID thymus. Also expressed in lymph nodes, heart, fetal liver, brain, spleen, intestine and kidney, but not in adult liver, skin, skeletal muscle and lung. Expressed in skin epidermis.

It localises to the endosome membrane. The protein localises to the cell membrane. It carries out the reaction N-acetyl-beta-D-glucosaminyl-(1-&gt;4)-1,6-anhydro-N-acetyl-beta-D-muramoyl-L-alanyl-gamma-D-glutamyl-meso-2,6-diaminopimeloyl-D-alanine(out) + n H(+)(out) = N-acetyl-beta-D-glucosaminyl-(1-&gt;4)-1,6-anhydro-N-acetyl-beta-D-muramoyl-L-alanyl-gamma-D-glutamyl-meso-2,6-diaminopimeloyl-D-alanine(in) + n H(+)(in). The enzyme catalyses L-alanyl-gamma-D-glutamyl-meso-2,6-diaminopimelate(out) + n H(+)(out) = L-alanyl-gamma-D-glutamyl-meso-2,6-diaminopimelate(in) + n H(+)(in). It catalyses the reaction N-acetyl-D-muramoyl-L-alanyl-D-isoglutamine(out) + n H(+)(out) = N-acetyl-D-muramoyl-L-alanyl-D-isoglutamine(in) + n H(+)(in). The catalysed reaction is 2',3'-cGAMP(out) + n H(+)(out) = 2',3'-cGAMP(in) + n H(+)(in). It carries out the reaction 3',3'-cGAMP(out) + n H(+)(out) = 3',3'-cGAMP(in) + n H(+)(in). With respect to regulation, down-regulated by the anti-inflammatory drug methotrexate. Proton-coupled transporter that delivers pathogen-associated or danger-associated molecular patterns to cytosolic pattern recognition receptors as part of the innate immune response to microbes or tissue injury. Has selectivity toward muropeptides that contain the amino acid diaminopimelic acid (DAP-type peptidoglycan muropeptides) including Tri-DAP and tracheal toxin (TCT), common in Gram-negative bacteria and Gram-positive bacilli. In the context of immune recognition of skin microbiota, shuttles bacterial muropeptides across the endolysosomal membranes into the cytosol for recognition by NOD1, triggering MYD88-dependent secretion of IL1A and neutrophil recruitment in a pyroptosis-type inflammatory process. To a lesser extent and redundantly, transports muramyl dipeptides derived from most bacterial proteoglycans, eliciting NOD2 receptor activation and downstream inflammatory responses. Postulated to function as an importer of cyclic GMP-AMP dinucleotides (cGAMPs) in monocyte and macrophage cell lineages. Selectively imports cGAMPs derived from pathogenic bacteria such as 3'3'-cGAMP thus providing for differential immune recognition of pathogenic versus commensal bacteria. During tumorigenesis may transport extracellular tumor-derived 2'3'-cGAMP across the plasma membrane of M1-polarized macrophages to activate the anti-tumoral stimulator of interferon genes (STING) pathway. The transport mechanism, its electrogenicity and stoichiometry remain to be elucidated. In Mus musculus (Mouse), this protein is Solute carrier family 46 member 2.